The chain runs to 229 residues: Small ribosomal subunit protein uS3 (229 aa).

The KH type-2 domain maps to 39–109; the sequence is MRKYIKEQLM…QVNIDIVEIR (71 aa). Residues 210–229 are disordered; it reads VVSQQNSRPSGPRGPRRPRA.

The protein belongs to the universal ribosomal protein uS3 family. Part of the 30S ribosomal subunit. Forms a tight complex with proteins S10 and S14.

In terms of biological role, binds the lower part of the 30S subunit head. Binds mRNA in the 70S ribosome, positioning it for translation. In Akkermansia muciniphila (strain ATCC BAA-835 / DSM 22959 / JCM 33894 / BCRC 81048 / CCUG 64013 / CIP 107961 / Muc), this protein is Small ribosomal subunit protein uS3.